Consider the following 203-residue polypeptide: Probable nicotinate-nucleotide adenylyltransferase (203 aa).

This sequence belongs to the NadD family.

The catalysed reaction is nicotinate beta-D-ribonucleotide + ATP + H(+) = deamido-NAD(+) + diphosphate. Its pathway is cofactor biosynthesis; NAD(+) biosynthesis; deamido-NAD(+) from nicotinate D-ribonucleotide: step 1/1. Its function is as follows. Catalyzes the reversible adenylation of nicotinate mononucleotide (NaMN) to nicotinic acid adenine dinucleotide (NaAD). The polypeptide is Probable nicotinate-nucleotide adenylyltransferase (Clostridium kluyveri (strain ATCC 8527 / DSM 555 / NBRC 12016 / NCIMB 10680 / K1)).